The following is a 104-amino-acid chain: MSYAIFKHGGKQYKVVEGDIVLLDKMNKEPKALVELVEVLAVSKEGKLSFGKPFVNGAKIEAEVINEGRGKKVITFKKRRRKDSKTKRGFRRDFTRVRITKIVA.

It belongs to the bacterial ribosomal protein bL21 family. Part of the 50S ribosomal subunit. Contacts protein L20.

Functionally, this protein binds to 23S rRNA in the presence of protein L20. This chain is Large ribosomal subunit protein bL21, found in Helicobacter pylori (strain P12).